A 378-amino-acid chain; its full sequence is Chaperone protein DnaJ (378 aa).

The region spanning 6–70 (DYYDVLGVSR…QKRQQYDQFG (65 aa)) is the J domain. The CR-type zinc finger occupies 137–219 (GKTSEISYSR…CHGKGVKTQK (83 aa)). Residues Cys-150, Cys-153, Cys-167, Cys-170, Cys-193, Cys-196, Cys-207, and Cys-210 each contribute to the Zn(2+) site. CXXCXGXG motif repeat units lie at residues 150-157 (CEVCKGSG), 167-174 (CDKCGGSG), 193-200 (CDKCTGSG), and 207-214 (CHNCHGKG).

This sequence belongs to the DnaJ family. Homodimer. Zn(2+) is required as a cofactor.

Its subcellular location is the cytoplasm. Participates actively in the response to hyperosmotic and heat shock by preventing the aggregation of stress-denatured proteins and by disaggregating proteins, also in an autonomous, DnaK-independent fashion. Unfolded proteins bind initially to DnaJ; upon interaction with the DnaJ-bound protein, DnaK hydrolyzes its bound ATP, resulting in the formation of a stable complex. GrpE releases ADP from DnaK; ATP binding to DnaK triggers the release of the substrate protein, thus completing the reaction cycle. Several rounds of ATP-dependent interactions between DnaJ, DnaK and GrpE are required for fully efficient folding. Also involved, together with DnaK and GrpE, in the DNA replication of plasmids through activation of initiation proteins. In Lactobacillus delbrueckii subsp. bulgaricus (strain ATCC 11842 / DSM 20081 / BCRC 10696 / JCM 1002 / NBRC 13953 / NCIMB 11778 / NCTC 12712 / WDCM 00102 / Lb 14), this protein is Chaperone protein DnaJ.